A 225-amino-acid polypeptide reads, in one-letter code: Small ribosomal subunit protein uS3 (225 aa).

Residues 38-106 (LRGHLRKKLS…DVALNIVEIR (69 aa)) form the KH type-2 domain.

This sequence belongs to the universal ribosomal protein uS3 family. In terms of assembly, part of the 30S ribosomal subunit. Forms a tight complex with proteins S10 and S14.

Functionally, binds the lower part of the 30S subunit head. Binds mRNA in the 70S ribosome, positioning it for translation. In Granulibacter bethesdensis (strain ATCC BAA-1260 / CGDNIH1), this protein is Small ribosomal subunit protein uS3.